Reading from the N-terminus, the 127-residue chain is Protein translocase subunit SecE (127 aa).

Residues methionine 1–tryptophan 19 lie on the Cytoplasmic side of the membrane. Residues valine 20–glycine 32 form a helical membrane-spanning segment. Residues asparagine 33–valine 48 lie on the Periplasmic side of the membrane. A helical transmembrane segment spans residues valine 49–leucine 60. Residues leucine 61–valine 97 lie on the Cytoplasmic side of the membrane. A helical transmembrane segment spans residues alanine 98–leucine 115. Topologically, residues valine 116–phenylalanine 127 are periplasmic.

Belongs to the SecE/SEC61-gamma family. In terms of assembly, component of the Sec protein translocase complex. Heterotrimer consisting of SecY, SecE and SecG subunits. The heterotrimers can form oligomers, although 1 heterotrimer is thought to be able to translocate proteins. Interacts with the ribosome. Interacts with SecDF, and other proteins may be involved. Interacts with SecA.

Its subcellular location is the cell inner membrane. Functionally, essential subunit of the Sec protein translocation channel SecYEG. Clamps together the 2 halves of SecY. May contact the channel plug during translocation. In Escherichia coli O157:H7, this protein is Protein translocase subunit SecE.